A 303-amino-acid chain; its full sequence is Coenzyme PQQ synthesis protein B (303 aa).

It belongs to the PqqB family.

The protein operates within cofactor biosynthesis; pyrroloquinoline quinone biosynthesis. Functionally, may be involved in the transport of PQQ or its precursor to the periplasm. The polypeptide is Coenzyme PQQ synthesis protein B (Pseudomonas fluorescens (strain Pf0-1)).